A 1035-amino-acid chain; its full sequence is Integrin alpha-9 (1035 aa).

The signal sequence occupies residues 1–29; that stretch reads MGGPAAPRGAGRLRALLLALVVAGIPAGA. Over 30-981 the chain is Extracellular; it reads YNLDPQRPVH…LEPRGYVVGW (952 aa). FG-GAP repeat units lie at residues 35–96, 111–174, 182–232, 233–289, 290–349, 351–408, and 411–474; these read QRPV…PDRR, SCGK…AKGR, EYKK…NTYL, KLND…SGTL, IKIF…GALE, QLAL…GIVP, and SMKL…LPGS. 3 cysteine pairs are disulfide-bonded: Cys87-Cys97, Cys142-Cys162, and Cys179-Cys194. Residue Asn225 is glycosylated (N-linked (GlcNAc...) asparagine). Positions 312, 314, 316, 320, 373, 375, 377, 381, 435, 437, 439, and 443 each coordinate Ca(2+). The N-linked (GlcNAc...) asparagine glycan is linked to Asn476. An intrachain disulfide couples Cys482 to Cys491. A glycan (N-linked (GlcNAc...) asparagine) is linked at Asn493. The cysteines at positions 497 and 555 are disulfide-linked. Asn612 is a glycosylation site (N-linked (GlcNAc...) asparagine). An intrachain disulfide couples Cys620 to Cys625. Asn654, Asn658, Asn672, and Asn676 each carry an N-linked (GlcNAc...) asparagine glycan. A disulfide bond links Cys696 and Cys706. N-linked (GlcNAc...) asparagine glycans are attached at residues Asn807 and Asn854. 2 disulfides stabilise this stretch: Cys855–Cys891 and Cys898–Cys903. N-linked (GlcNAc...) asparagine glycosylation occurs at Asn904. A helical transmembrane segment spans residues 982–1002; sequence IIAISLLVGILIFLLLAVLLW. Residues 1003-1035 lie on the Cytoplasmic side of the membrane; that stretch reads KMGFFRRRYKEIIEAEKNRKENEDSWDWVQKNQ. The GFFKR motif signature appears at 1005 to 1009; that stretch reads GFFRR.

It belongs to the integrin alpha chain family. As to quaternary structure, heterodimer of an alpha and a beta subunit. Alpha-9 (ITGA9) associates with beta-1 (ITGB1). Integrin ITGA9:ITGB1 interacts with FBLN5 (via N-terminus). Integrin ITGA9:ITGB1 interacts with SPP1/OPN (via N-terminus). Integrin ITGA9:ITGB1 interacts with TNC/TNFN3 (via the 3rd Fibronectin type-III domain). Integrin ITGA9:ITGB1 interacts with SVEP1/polydom (via Sushi domain 21); thereby inhibits Ca(2+) intracellular signaling and as a result represses vasocontraction. Expressed in vascular smooth muscle cells (at protein level). Expressed in the airway epithelium (at protein level).

It is found in the membrane. Integrin alpha-9/beta-1 (ITGA9:ITGB1) is a receptor for VCAM1, cytotactin and osteopontin. It recognizes the sequence A-E-I-D-G-I-E-L in cytotactin. ITGA9:ITGB1 may play a crucial role in SVEP1/polydom-mediated myoblast cell adhesion. Integrin ITGA9:ITGB1 represses PRKCA-mediated L-type voltage-gated channel Ca(2+) influx and ROCK-mediated calcium sensitivity in vascular smooth muscle cells via its interaction with SVEP1, thereby inhibiting vasocontraction. This chain is Integrin alpha-9 (ITGA9), found in Homo sapiens (Human).